Consider the following 90-residue polypeptide: Probable Fe(2+)-trafficking protein (90 aa).

Belongs to the Fe(2+)-trafficking protein family.

Functionally, could be a mediator in iron transactions between iron acquisition and iron-requiring processes, such as synthesis and/or repair of Fe-S clusters in biosynthetic enzymes. This is Probable Fe(2+)-trafficking protein from Cupriavidus pinatubonensis (strain JMP 134 / LMG 1197) (Cupriavidus necator (strain JMP 134)).